The chain runs to 142 residues: Hemoglobin subunit alpha-1 (142 aa).

The 141-residue stretch at 2-142 folds into the Globin domain; sequence KLSADDKHNV…VGYVLASKYR (141 aa). An O2-binding site is contributed by His59. His88 provides a ligand contact to heme b.

It belongs to the globin family. Major hemoglobin is a heterotetramer of two alpha-1 chains and two beta-1 chains. As to expression, red blood cells.

Functionally, involved in oxygen transport from the lung to the various peripheral tissues. This Triturus cristatus (Great crested newt) protein is Hemoglobin subunit alpha-1.